The sequence spans 506 residues: BTB/POZ domain-containing protein 16 (506 aa).

Residues 150–206 (INDPAVTRVAFALALKNLYMNEVEMTVDNVLGVLASAHILQFNRLFRKCVSTMLNRL) form the BTB domain.

In Rattus norvegicus (Rat), this protein is BTB/POZ domain-containing protein 16 (Btbd16).